We begin with the raw amino-acid sequence, 431 residues long: Gamma-glutamyl phosphate reductase (431 aa).

Belongs to the gamma-glutamyl phosphate reductase family.

The protein resides in the cytoplasm. The enzyme catalyses L-glutamate 5-semialdehyde + phosphate + NADP(+) = L-glutamyl 5-phosphate + NADPH + H(+). The protein operates within amino-acid biosynthesis; L-proline biosynthesis; L-glutamate 5-semialdehyde from L-glutamate: step 2/2. Catalyzes the NADPH-dependent reduction of L-glutamate 5-phosphate into L-glutamate 5-semialdehyde and phosphate. The product spontaneously undergoes cyclization to form 1-pyrroline-5-carboxylate. The sequence is that of Gamma-glutamyl phosphate reductase from Acetivibrio thermocellus (strain ATCC 27405 / DSM 1237 / JCM 9322 / NBRC 103400 / NCIMB 10682 / NRRL B-4536 / VPI 7372) (Clostridium thermocellum).